The primary structure comprises 511 residues: Early growth response protein 1 (511 aa).

Disordered regions lie at residues 133 to 169 (ASIPSSTSQATHPSSSSTSSIPSSSSSSTSSASLSCS) and 291 to 312 (PSRMRKYPNRPSKTPPHERPYA). Over residues 137–169 (SSTSQATHPSSSSTSSIPSSSSSSTSSASLSCS) the composition is skewed to low complexity. 3 C2H2-type zinc fingers span residues 311 to 335 (YACPVETCDRRFSRSDELTRHIRIH), 341 to 363 (FQCRICMRNFSRSDHLTTHIRTH), and 369 to 391 (FACEICGRKFARSDERKRHTKIH). The disordered stretch occupies residues 384-406 (RKRHTKIHMRQKDKKAEKGATAA). The span at 386-396 (RHTKIHMRQKD) shows a compositional bias: basic residues.

The protein belongs to the EGR C2H2-type zinc-finger protein family. As to expression, detected in muscle and brain.

It localises to the nucleus. The protein resides in the cytoplasm. Functionally, transcriptional regulator. Recognizes and binds to the DNA sequence 5'-GCG(T/G)GGGCG-3'(EGR-site) in the promoter region of target genes. Binds double-stranded target DNA, irrespective of the cytosine methylation status. Regulates the transcription of numerous target genes, and thereby plays an important role in regulating the response to growth factors, DNA damage, and ischemia. Plays a role in the regulation of cell survival, proliferation and cell death. Mediates responses to ischemia and hypoxia; regulates the expression of proteins that are involved in inflammatory processes. Plays a role in regulating the expression of circadian clock genes. Plays a role in the organization of Muller glia cells in the inner and outer plexiform layers of the retina. In Danio rerio (Zebrafish), this protein is Early growth response protein 1 (egr1).